The chain runs to 298 residues: MNKDRVKLAIAPIGWTNDDMPDLGKENTFQQCISEMALAGFIGSEVGSKYPRDPNVLKPMLELRGMQICNAWFSTFFADGQRARTIDEFTNHMNFLHAMGAKVIGCSEQSKSIQGTTKAIFEEKPYFTDTEWQRVAEGYNELAKIAATKGMQVCLHHHMGTGIQTTEEIDRYMSMVNDDVYLLFDTGHAYYSEGSQEAMLAILEKYLPRINHVHLKDVRDEVVAEVKAKKLSFLDGVKKGTFTVPGDGVIDFRPVFKLLDEKGYQGWMVVEAEQDPAIANPFEYAVKARRYIKETAGI.

The protein belongs to the IolE/MocC family. Glutathione serves as cofactor. Co(2+) is required as a cofactor. Requires Mn(2+) as cofactor.

It catalyses the reaction scyllo-inosose = 3D-3,5/4-trihydroxycyclohexane-1,2-dione + H2O. Functionally, catalyzes the dehydration of inosose (2-keto-myo-inositol, 2KMI or 2,4,6/3,5-pentahydroxycyclohexanone) to 3D-(3,5/4)-trihydroxycyclohexane-1,2-dione (D-2,3-diketo-4-deoxy-epi-inositol). This is Inosose dehydratase from Yersinia enterocolitica serotype O:8 / biotype 1B (strain NCTC 13174 / 8081).